We begin with the raw amino-acid sequence, 170 residues long: Lipoprotein signal peptidase (170 aa).

Transmembrane regions (helical) follow at residues 71 to 91 (YFFIGIAVVVSIFLIKLILEN) and 97 to 116 (AIAYSLILGGAMGNLIDRVF). Catalysis depends on residues aspartate 122 and aspartate 140. The chain crosses the membrane as a helical span at residues 131 to 151 (WHWPAFNLADIAIVLGALLFV).

Belongs to the peptidase A8 family.

It is found in the cell inner membrane. It carries out the reaction Release of signal peptides from bacterial membrane prolipoproteins. Hydrolyzes -Xaa-Yaa-Zaa-|-(S,diacylglyceryl)Cys-, in which Xaa is hydrophobic (preferably Leu), and Yaa (Ala or Ser) and Zaa (Gly or Ala) have small, neutral side chains.. Its pathway is protein modification; lipoprotein biosynthesis (signal peptide cleavage). Functionally, this protein specifically catalyzes the removal of signal peptides from prolipoproteins. The sequence is that of Lipoprotein signal peptidase from Serratia marcescens.